The primary structure comprises 277 residues: Ribosomal RNA small subunit methyltransferase A (277 aa).

S-adenosyl-L-methionine contacts are provided by Asn-27, Leu-29, Gly-54, Glu-75, Asp-95, and Asn-118.

Belongs to the class I-like SAM-binding methyltransferase superfamily. rRNA adenine N(6)-methyltransferase family. RsmA subfamily.

Its subcellular location is the cytoplasm. It carries out the reaction adenosine(1518)/adenosine(1519) in 16S rRNA + 4 S-adenosyl-L-methionine = N(6)-dimethyladenosine(1518)/N(6)-dimethyladenosine(1519) in 16S rRNA + 4 S-adenosyl-L-homocysteine + 4 H(+). Functionally, specifically dimethylates two adjacent adenosines (A1518 and A1519) in the loop of a conserved hairpin near the 3'-end of 16S rRNA in the 30S particle. May play a critical role in biogenesis of 30S subunits. The polypeptide is Ribosomal RNA small subunit methyltransferase A (Chlamydia muridarum (strain MoPn / Nigg)).